Reading from the N-terminus, the 122-residue chain is Fluoride-specific ion channel FluC 2 (122 aa).

The next 4 membrane-spanning stretches (helical) occupy residues 4–24 (VAVW…RFVV), 38–58 (LGTL…GGLA), 63–83 (AALL…TWML), and 96–116 (AALA…FIGQ). Residues Gly-73 and Thr-76 each contribute to the Na(+) site.

Belongs to the fluoride channel Fluc/FEX (TC 1.A.43) family.

Its subcellular location is the cell membrane. It carries out the reaction fluoride(in) = fluoride(out). With respect to regulation, na(+) is not transported, but it plays an essential structural role and its presence is essential for fluoride channel function. Its function is as follows. Fluoride-specific ion channel. Important for reducing fluoride concentration in the cell, thus reducing its toxicity. The chain is Fluoride-specific ion channel FluC 2 from Mycolicibacterium paratuberculosis (strain ATCC BAA-968 / K-10) (Mycobacterium paratuberculosis).